The primary structure comprises 57 residues: uncharacterized protein (57 aa).

Residues 21-37 (GTYTLVVAFVLAFLVYS) traverse the membrane as a helical segment.

The protein localises to the host membrane. This is an uncharacterized protein from Human herpesvirus 6B (strain Z29) (HHV-6 variant B).